A 172-amino-acid chain; its full sequence is C-phycocyanin beta chain (172 aa).

Asn72 is subject to N4-methylasparagine. (2R,3E)-phycocyanobilin contacts are provided by Cys82 and Cys153.

The protein belongs to the phycobiliprotein family. Heterodimer of an alpha and a beta subunit, which further assembles into trimers and the trimers into hexamers. The basic functional unit of phycobiliproteins is a ring-shaped hexamer formed from two back-to-back trimers contacting via the alpha chain subunits. The trimers are composed of alpha/beta subunit heterodimers arranged around a three-fold axis of symmetry. The phycoerythrins also contain a gamma subunit which is located in the center of the hexamer. Post-translationally, contains two covalently linked bilin chromophores.

It localises to the plastid. Its subcellular location is the chloroplast thylakoid membrane. Its function is as follows. Light-harvesting photosynthetic bile pigment-protein from the phycobiliprotein complex (phycobilisome, PBS). Phycocyanin is the major phycobiliprotein in the PBS rod. The polypeptide is C-phycocyanin beta chain (cpcB) (Pyropia yezoensis (Susabi-nori)).